The chain runs to 571 residues: Proline--tRNA ligase (571 aa).

It belongs to the class-II aminoacyl-tRNA synthetase family. ProS type 1 subfamily. In terms of assembly, homodimer.

It is found in the cytoplasm. It carries out the reaction tRNA(Pro) + L-proline + ATP = L-prolyl-tRNA(Pro) + AMP + diphosphate. In terms of biological role, catalyzes the attachment of proline to tRNA(Pro) in a two-step reaction: proline is first activated by ATP to form Pro-AMP and then transferred to the acceptor end of tRNA(Pro). As ProRS can inadvertently accommodate and process non-cognate amino acids such as alanine and cysteine, to avoid such errors it has two additional distinct editing activities against alanine. One activity is designated as 'pretransfer' editing and involves the tRNA(Pro)-independent hydrolysis of activated Ala-AMP. The other activity is designated 'posttransfer' editing and involves deacylation of mischarged Ala-tRNA(Pro). The misacylated Cys-tRNA(Pro) is not edited by ProRS. The sequence is that of Proline--tRNA ligase from Azotobacter vinelandii (strain DJ / ATCC BAA-1303).